The primary structure comprises 356 residues: Arginine kinase Lit v 2.0101 (356 aa).

Residues 9–91 (KLEAGFKKLE…FDPIIEDYHV (83 aa)) enclose the Phosphagen kinase N-terminal domain. 64–68 (GVGIY) is an L-arginine binding site. Positions 119–356 (FVISTRVRCG…LELIKIEKEM (238 aa)) constitute a Phosphagen kinase C-terminal domain. ATP is bound by residues 122 to 126 (STRVR) and histidine 185. Glutamate 225 serves as a coordination point for L-arginine. Residue arginine 229 coordinates ATP. Cysteine 271 lines the L-arginine pocket. Residues 280 to 284 (RASVH) and 309 to 314 (RGTRGE) each bind ATP. Glutamate 314 contacts L-arginine.

It belongs to the ATP:guanido phosphotransferase family. Monomer. As to expression, muscle (at protein level).

It carries out the reaction L-arginine + ATP = N(omega)-phospho-L-arginine + ADP + H(+). The catalysed reaction is dTDP + ATP = dTTP + ADP. In terms of biological role, catalyzes the reversible transfer of high energy ATP gamma-phosphate group to L-arginine. Has nucleoside diphosphate kinase-like activity toward dTDP. Binds and phosphorylates dTDP using ATP as a phosphate donor. Does not phosphorylate dADP, dCDP, dGDP, dTMP or thymidine. This Penaeus vannamei (Whiteleg shrimp) protein is Arginine kinase Lit v 2.0101.